The following is a 941-amino-acid chain: Coiled-coil domain-containing protein 40 (941 aa).

Positions 1–14 (MEGRQEDQMNRQEE) are enriched in basic and acidic residues. The interval 1 to 31 (MEGRQEDQMNRQEEVEQSNNYDRSVDHARTG) is disordered. 6 coiled-coil regions span residues 130-154 (VQEMLARLQASLEVCQETNSEAAAQ), 210-430 (DIKA…QIMN), 548-572 (LEIHAATLSKELEEVGAKIKECQQL), 609-765 (IRRE…AKSK), 814-856 (AQLE…EIKE), and 895-915 (HKQEERLKMVSLTLQRLAQEY).

This sequence belongs to the CCDC40 family. Expressed in tissues that contain motile cilia, including Kupffer's vesicle, the floorplate, the pronephric tubules and the otic vesicle.

It is found in the cytoplasm. The protein resides in the cell projection. The protein localises to the cilium. Its function is as follows. Required for assembly of dynein regulatory complex (DRC) and inner dynein arm (IDA) complexes, which are responsible for ciliary beat regulation, thereby playing a central role in motility in cilia and flagella. Probably acts together with ccdc39 to form a molecular ruler that determines the 96 nanometer (nm) repeat length and arrangements of components in cilia and flagella. The chain is Coiled-coil domain-containing protein 40 (ccdc40) from Danio rerio (Zebrafish).